The chain runs to 510 residues: Glycerol kinase (510 aa).

An ADP-binding site is contributed by threonine 13. ATP is bound by residues threonine 13 and threonine 14. Sn-glycerol 3-phosphate is bound at residue threonine 13. Arginine 17 provides a ligand contact to ADP. Sn-glycerol 3-phosphate is bound by residues arginine 83, glutamate 84, tyrosine 135, and aspartate 255. 5 residues coordinate glycerol: arginine 83, glutamate 84, tyrosine 135, aspartate 255, and glutamine 256. ADP is bound by residues threonine 277, glycine 321, glycine 421, and asparagine 425. 3 residues coordinate ATP: threonine 277, glycine 321, and glycine 421.

This sequence belongs to the FGGY kinase family.

It catalyses the reaction glycerol + ATP = sn-glycerol 3-phosphate + ADP + H(+). The protein operates within polyol metabolism; glycerol degradation via glycerol kinase pathway; sn-glycerol 3-phosphate from glycerol: step 1/1. Its function is as follows. Key enzyme in the regulation of glycerol uptake and metabolism. Catalyzes the phosphorylation of glycerol to yield sn-glycerol 3-phosphate. This Halobacterium salinarum (strain ATCC 29341 / DSM 671 / R1) protein is Glycerol kinase.